Reading from the N-terminus, the 391-residue chain is Beta sliding clamp (391 aa).

This sequence belongs to the beta sliding clamp family. As to quaternary structure, forms a ring-shaped head-to-tail homodimer around DNA which binds and tethers DNA polymerases and other proteins to the DNA. The DNA replisome complex has a single clamp-loading complex (3 tau and 1 each of delta, delta', psi and chi subunits) which binds 3 Pol III cores (1 core on the leading strand and 2 on the lagging strand) each with a beta sliding clamp dimer. Additional proteins in the replisome are other copies of gamma, psi and chi, Ssb, DNA helicase and RNA primase.

It localises to the cytoplasm. Functionally, confers DNA tethering and processivity to DNA polymerases and other proteins. Acts as a clamp, forming a ring around DNA (a reaction catalyzed by the clamp-loading complex) which diffuses in an ATP-independent manner freely and bidirectionally along dsDNA. Initially characterized for its ability to contact the catalytic subunit of DNA polymerase III (Pol III), a complex, multichain enzyme responsible for most of the replicative synthesis in bacteria; Pol III exhibits 3'-5' exonuclease proofreading activity. The beta chain is required for initiation of replication as well as for processivity of DNA replication. The chain is Beta sliding clamp (dnaN) from Synechocystis sp. (strain ATCC 27184 / PCC 6803 / Kazusa).